We begin with the raw amino-acid sequence, 129 residues long: Small ribosomal subunit protein uS11c (129 aa).

This sequence belongs to the universal ribosomal protein uS11 family. In terms of assembly, part of the 30S ribosomal subunit.

It localises to the plastid. It is found in the chloroplast. The protein is Small ribosomal subunit protein uS11c of Gracilaria tenuistipitata var. liui (Red alga).